A 505-amino-acid chain; its full sequence is Catalase (505 aa).

Catalysis depends on residues H56 and N129. A heme-binding site is contributed by Y339.

The protein belongs to the catalase family. Requires heme as cofactor.

It localises to the cytoplasm. The catalysed reaction is 2 H2O2 = O2 + 2 H2O. In terms of biological role, decomposes hydrogen peroxide into water and oxygen; serves to protect cells from the toxic effects of hydrogen peroxide. This is Catalase (katA) from Helicobacter pylori (strain ATCC 700392 / 26695) (Campylobacter pylori).